Reading from the N-terminus, the 7354-residue chain is Microtubule-actin cross-linking factor 1, isoforms 1/2/3/4 (7354 aa).

A disordered region spans residues 1 to 47; that stretch reads MSSSDEETLSERSCRSERSCRSERSYRSERSGSLSPCPPGDTLPWNL. An actin-binding region spans residues 1–295; sequence MSSSDEETLS…VITYVSSIYD (295 aa). Serine 4 is modified (phosphoserine). The span at 9–30 shows a compositional bias: basic and acidic residues; the sequence is LSERSCRSERSCRSERSYRSER. Serine 35 is modified (phosphoserine). Position 42 is a phosphothreonine (threonine 42). Serine 57 is modified (phosphoserine). 2 consecutive Calponin-homology (CH) domains span residues 78–181 and 194–298; these read RVQK…LHFQ and MSAK…DAFP. Residues 148–171 form an LRR 1 repeat; it reads QRQVKLVNIRNDDITDGNPKLTLG. Position 280 is a phosphoserine (serine 280). 2 LRR repeats span residues 377–399 and 441–464; these read LYKL…YHPN and LNCE…LESG. The SH3 domain maps to 868–925; sequence KSTLSVKAICDYRQIEITICKNDECVLEDNSQRTKWKVISPTGNEAMVPSVCFLIPPP. One copy of the LRR 5 repeat lies at 1050 to 1073; the sequence is ISELKNIRLLLEECEQRLLKQIQS. A Phosphoserine modification is found at serine 1122. LRR repeat units lie at residues 1128–1154, 1187–1210, and 1257–1282; these read ATTL…VYLN, PADL…VKDK, and HRVI…DYRA. Phosphoserine is present on residues serine 1367 and serine 1376. Plectin repeat units lie at residues 1577-1619, 1654-1696, 1769-1809, 1811-1848, and 1855-1885; these read LVLL…QLLG, LKVL…ELQS, RLLE…CAIL, RQLQ…VILE, and GLLL…HKIL. Phosphoserine occurs at positions 2051, 2077, and 2081. 2 stretches are compositionally biased toward basic and acidic residues: residues 2120–2131 and 2145–2155; these read KEEQAETLREEN and SEGKDLSTEKS. Positions 2120-2155 are disordered; it reads KEEQAETLREENISGDPLLVECPEESEGKDLSTEKS. 5 Plectin repeats span residues 2276-2316, 2352-2393, 2394-2425, 2487-2528, and 2671-2715; these read STLS…VKLM, NVLM…RILE, GQVI…DTAD, LLTK…LRKV, and LKVL…ASHQ. 3 disordered regions span residues 2806-2841, 2951-2978, and 3058-3099; these read AGIR…DSKV, EMGG…EVTI, and SQET…HISK. A compositionally biased stretch (basic and acidic residues) spans 2812-2837; the sequence is NGEKAEKGRKISVEMEGQRQDEKASS. The span at 2968–2978 shows a compositional bias: acidic residues; the sequence is SEEESDQEVTI. A phosphoserine mark is found at serine 3082 and serine 3085. 3 LRR repeats span residues 3225-3244, 3606-3630, and 3657-3681; these read VGQR…LPTR, SGKS…IQSH, and LTAL…TRVA. Spectrin repeat units lie at residues 3845 to 3920 and 3962 to 4070; these read ELQK…NFEE and QYQQ…ALLQ. Serine 3889 bears the Phosphoserine mark. The LRR 12 repeat unit spans residues 3898 to 3920; that stretch reads KGDLRFVTISGQKVLETENNFEE. LRR repeat units lie at residues 4087–4112 and 4223–4249; these read LQSI…VIQE and IQEL…TLGS. A Spectrin 3 repeat occupies 4428-4536; that stretch reads RMEEVQKEAS…TVARQKQLEE (109 aa). Residues serine 4458 and serine 4483 each carry the phosphoserine modification. 3 LRR repeats span residues 4473–4496, 4563–4583, and 4728–4751; these read KAFL…LAGL, GVLG…QFML, and KKRL…RMNR. One copy of the Spectrin 4 repeat lies at 4759–4863; sequence TQQFQQMFDE…KTANRQSRLK (105 aa). At serine 4921 the chain carries Phosphoserine. LRR repeat units follow at residues 5010–5035, 5131–5153, and 5240–5263; these read NKNL…YLRN, NKIQ…MLEE, and KDQV…LIQS. 13 Spectrin repeats span residues 5195–5300, 5307–5409, 5414–5506, 5631–5735, 5742–5844, 5961–6066, 6071–6175, 6181–6284, 6289–6395, 6400–6503, 6508–6614, 6621–6722, and 6726–6830; these read EDFY…QLQE, KFQD…QLED, AKQF…ADIT, RSQQ…ARLE, NQFW…ALDE, LAEK…KLED, AVQY…HKLE, LGQF…QQLQ, QAQG…KLEE, ATEF…RSLD, RAKQ…KLEE, QFMD…RLEQ, and QAEE…QRLE. Threonine 5394 carries the phosphothreonine modification. LRR repeat units lie at residues 5654–5678 and 5763–5787; these read MALG…AFSI and AQLP…QLRE. Serine 5988 is subject to Phosphoserine. Lysine 6166 carries the N6-acetyllysine modification. An LRR 23 repeat occupies 6452–6475; that stretch reads RDQIIELDQTGNQLKFLSQKQDVV. A disordered region spans residues 6904 to 6937; the sequence is SVEPTHAPFMEKSRSGSRKSLNQPTPPPMPILSQ. Serine 6923 is subject to Phosphoserine. EF-hand domains lie at 7001-7036 and 7037-7072; these read HKKS…SKFP and TTKL…NKDA. Ca(2+) contacts are provided by aspartate 7014, aspartate 7016, aspartate 7018, lysine 7020, glutamate 7025, aspartate 7050, aspartate 7052, aspartate 7054, tyrosine 7056, and glutamate 7061. The region spanning 7077–7155 is the GAR domain; the sequence is TDADKIEDEV…EFLVKNDPCR (79 aa). A C-terminal tail region spans residues 7077-7354; sequence TDADKIEDEV…ASPRTPGPKR (278 aa). Residues 7171–7354 are disordered; that stretch reads PEGASQGMTP…ASPRTPGPKR (184 aa). Residues 7191–7225 show a composition bias toward low complexity; that stretch reads SSRAASPTRSSSSASQSNHSCTSMPSSPATPASGT. Position 7220 is a phosphothreonine (threonine 7220). The span at 7242 to 7261 shows a compositional bias: polar residues; sequence FHSSRTSLAGDTSNSSSPAS. 2 positions are modified to phosphoserine: serine 7245 and serine 7258. Residues 7276–7290 show a composition bias toward low complexity; it reads SRPGSRAGSRAGSRA. The 4 X 4 AA tandem repeats of [GS]-S-R-[AR] stretch occupies residues 7279–7294; the sequence is GSRAGSRAGSRASSRR. 2 positions are modified to phosphoserine: serine 7296 and serine 7299. The span at 7305–7315 shows a compositional bias: polar residues; the sequence is ETQSACSDTSE. The span at 7316–7327 shows a compositional bias: low complexity; that stretch reads SSAAGGQGSSRR.

It belongs to the plakin or cytolinker family. Interacts with AXIN1, LRP6 and GOLGA4. Found in a complex composed of MACF1, APC, AXIN1, CTNNB1 and GSK3B. Interacts with MAPRE1, CLASP1 and CLASP2. Interacts with CAMSAP3. Post-translationally, phosphorylated on serine residues in the C-terminal tail by GSK3B. Phosphorylation inhibits microtubule-binding and this plays a critical role in bulge stem cell migration and skin wound repair. Wnt-signaling can repress phosphorylation. As to expression, enriched in the hair follicle stem cells (at protein level). Isoform 1 and isoform 2 are ubiquitous expressed, with higher levels seen in lung, heart, thymus, spleen and brain.

The protein resides in the cytoplasm. The protein localises to the cytoskeleton. It localises to the golgi apparatus. It is found in the cell membrane. Its subcellular location is the cell projection. The protein resides in the ruffle membrane. In terms of biological role, F-actin-binding protein which plays a role in cross-linking actin to other cytoskeletal proteins and also binds to microtubules. Plays an important role in ERBB2-dependent stabilization of microtubules at the cell cortex. Acts as a positive regulator of Wnt receptor signaling pathway and is involved in the translocation of AXIN1 and its associated complex (composed of APC, CTNNB1 and GSK3B) from the cytoplasm to the cell membrane. Has actin-regulated ATPase activity and is essential for controlling focal adhesions (FAs) assembly and dynamics. Interaction with CAMSAP3 at the minus ends of non-centrosomal microtubules tethers microtubules minus-ends to actin filaments, regulating focal adhesion size and cell migration. May play role in delivery of transport vesicles containing GPI-linked proteins from the trans-Golgi network through its interaction with GOLGA4. Plays a key role in wound healing and epidermal cell migration. Required for efficient upward migration of bulge cells in response to wounding and this function is primarily rooted in its ability to coordinate microtubule dynamics and polarize hair follicle stem cells. As a regulator of actin and microtubule arrangement and stabilization, it plays an essential role in neurite outgrowth, branching and spine formation during brain development. This is Microtubule-actin cross-linking factor 1, isoforms 1/2/3/4 from Mus musculus (Mouse).